Reading from the N-terminus, the 236-residue chain is 7-cyano-7-deazaguanine synthase (236 aa).

Residue 21 to 31 (LSGGLDSATVL) coordinates ATP. Positions 202, 212, 215, and 218 each coordinate Zn(2+).

This sequence belongs to the QueC family. It depends on Zn(2+) as a cofactor.

It catalyses the reaction 7-carboxy-7-deazaguanine + NH4(+) + ATP = 7-cyano-7-deazaguanine + ADP + phosphate + H2O + H(+). Its pathway is purine metabolism; 7-cyano-7-deazaguanine biosynthesis. Functionally, catalyzes the ATP-dependent conversion of 7-carboxy-7-deazaguanine (CDG) to 7-cyano-7-deazaguanine (preQ(0)). The protein is 7-cyano-7-deazaguanine synthase of Frankia casuarinae (strain DSM 45818 / CECT 9043 / HFP020203 / CcI3).